Consider the following 211-residue polypeptide: MITGKLITVEGPDGAGKTTVLEQLIPLLKQKVAQEILTTREPGGVAISEYIRELILDINHTTMDPKTELLLYIAARRQHLVEKVLPALEAGQLVFIDRFIDSSVAYQGAGRGLIKADIQWLNEFATDGLEPDLTLYFDVPSEIGLARINANQQREVNRLDLETIEIHQRVRKGYLALAKEHPKRIVTIDATKPLKEVVSVALEHVLTLLLA.

11–18 provides a ligand contact to ATP; it reads GPDGAGKT.

It belongs to the thymidylate kinase family.

The enzyme catalyses dTMP + ATP = dTDP + ADP. Its function is as follows. Phosphorylation of dTMP to form dTDP in both de novo and salvage pathways of dTTP synthesis. The protein is Thymidylate kinase of Streptococcus pyogenes serotype M3 (strain ATCC BAA-595 / MGAS315).